The primary structure comprises 438 residues: Acid phosphatase type 7 (438 aa).

The signal sequence occupies residues 1–23; that stretch reads MSPFLGGWLFFCMLLPFSPGVQG. Positions 141, 170, and 173 each coordinate Fe cation. Asp-170 provides a ligand contact to Zn(2+). Position 205 (Asn-205) interacts with Zn(2+). Asn-211 carries N-linked (GlcNAc...) asparagine glycosylation. Residues His-286 and His-333 each coordinate Zn(2+). His-335 provides a ligand contact to Fe cation. Residues Asn-350 and Asn-404 are each glycosylated (N-linked (GlcNAc...) asparagine).

Belongs to the metallophosphoesterase superfamily. Purple acid phosphatase family. Fe cation serves as cofactor. The cofactor is Zn(2+).

It is found in the secreted. The enzyme catalyses a phosphate monoester + H2O = an alcohol + phosphate. This Mus musculus (Mouse) protein is Acid phosphatase type 7.